Consider the following 1174-residue polypeptide: RecBCD enzyme subunit RecB (1174 aa).

Residues 1–852 (MKIDSLKEKL…GGKTMNYEGL (852 aa)) form a DNA-binding and helicase activity, interacts with RecC region. Residues 4 to 449 (DSLKEKLNIF…YYLDTNWRSS (446 aa)) enclose the UvrD-like helicase ATP-binding domain. 25 to 32 (ASAGTGKT) lines the ATP pocket. Positions 479-745 (PSSKNLKMNF…KIITIHKSKG (267 aa)) constitute a UvrD-like helicase C-terminal domain. The interval 900–1174 (TWSITSFSQL…LIKKTMTLIS (275 aa)) is nuclease activity, interacts with RecD and RecA. The Mg(2+) site is built by H957, D1068, and D1081. D1081 acts as the For nuclease activity in catalysis.

It belongs to the helicase family. UvrD subfamily. Heterotrimer of RecB, RecC and RecD. All subunits contribute to DNA-binding. Interacts with RecA. Mg(2+) is required as a cofactor.

It carries out the reaction Exonucleolytic cleavage (in the presence of ATP) in either 5'- to 3'- or 3'- to 5'-direction to yield 5'-phosphooligonucleotides.. The catalysed reaction is Couples ATP hydrolysis with the unwinding of duplex DNA by translocating in the 3'-5' direction.. The enzyme catalyses ATP + H2O = ADP + phosphate + H(+). In terms of biological role, a helicase/nuclease that prepares dsDNA breaks (DSB) for recombinational DNA repair. Binds to DSBs and unwinds DNA via a highly rapid and processive ATP-dependent bidirectional helicase activity. Unwinds dsDNA until it encounters a Chi (crossover hotspot instigator) sequence from the 3' direction. Cuts ssDNA a few nucleotides 3' to the Chi site. The properties and activities of the enzyme are changed at Chi. The Chi-altered holoenzyme produces a long 3'-ssDNA overhang and facilitates RecA-binding to the ssDNA for homologous DNA recombination and repair. Holoenzyme degrades any linearized DNA that is unable to undergo homologous recombination. In the holoenzyme this subunit contributes ATPase, 3'-5' helicase, exonuclease activity and loads RecA onto ssDNA. This chain is RecBCD enzyme subunit RecB, found in Buchnera aphidicola subsp. Acyrthosiphon pisum (strain APS) (Acyrthosiphon pisum symbiotic bacterium).